Reading from the N-terminus, the 425-residue chain is 2-methylserine hydroxymethyltransferase (425 aa).

(6S)-5,6,7,8-tetrahydrofolate-binding positions include leucine 126 and 130-132 (GHL). The residue at position 235 (lysine 235) is an N6-(pyridoxal phosphate)lysine. A (6S)-5,6,7,8-tetrahydrofolate-binding site is contributed by glutamate 251.

It belongs to the SHMT family. As to quaternary structure, homodimer. The cofactor is pyridoxal 5'-phosphate.

The protein resides in the cytoplasm. The catalysed reaction is (6R)-5,10-methylene-5,6,7,8-tetrahydrofolate + D-alanine + H2O = 2-methylserine + (6S)-5,6,7,8-tetrahydrofolate. It functions in the pathway one-carbon metabolism; tetrahydrofolate interconversion. Catalyzes the reversible interconversion of alpha-methyl-L-serine to D-alanine with tetrahydrofolate (THF) serving as the one-carbon carrier. Cannot use alpha-methyl-D-serine, L-serine, D-serine or L-alanine. This is 2-methylserine hydroxymethyltransferase from Ensifer sp.